The chain runs to 379 residues: Queuine tRNA-ribosyltransferase (379 aa).

Asp89 serves as the catalytic Proton acceptor. Residues 89–93 (DSGGF), Asp143, Gln187, and Gly214 each bind substrate. An RNA binding region spans residues 245-251 (GVGKPED). Asp264 acts as the Nucleophile in catalysis. The tract at residues 269–273 (TRNAR) is RNA binding; important for wobble base 34 recognition. Positions 302, 304, 307, and 333 each coordinate Zn(2+).

This sequence belongs to the queuine tRNA-ribosyltransferase family. Homodimer. Within each dimer, one monomer is responsible for RNA recognition and catalysis, while the other monomer binds to the replacement base PreQ1. Requires Zn(2+) as cofactor.

It catalyses the reaction 7-aminomethyl-7-carbaguanine + guanosine(34) in tRNA = 7-aminomethyl-7-carbaguanosine(34) in tRNA + guanine. It functions in the pathway tRNA modification; tRNA-queuosine biosynthesis. Its function is as follows. Catalyzes the base-exchange of a guanine (G) residue with the queuine precursor 7-aminomethyl-7-deazaguanine (PreQ1) at position 34 (anticodon wobble position) in tRNAs with GU(N) anticodons (tRNA-Asp, -Asn, -His and -Tyr). Catalysis occurs through a double-displacement mechanism. The nucleophile active site attacks the C1' of nucleotide 34 to detach the guanine base from the RNA, forming a covalent enzyme-RNA intermediate. The proton acceptor active site deprotonates the incoming PreQ1, allowing a nucleophilic attack on the C1' of the ribose to form the product. After dissociation, two additional enzymatic reactions on the tRNA convert PreQ1 to queuine (Q), resulting in the hypermodified nucleoside queuosine (7-(((4,5-cis-dihydroxy-2-cyclopenten-1-yl)amino)methyl)-7-deazaguanosine). The chain is Queuine tRNA-ribosyltransferase from Edwardsiella ictaluri (strain 93-146).